Reading from the N-terminus, the 669-residue chain is DNA mismatch repair protein MutL (669 aa).

Positions 356–371 (FEQRQNTENKQEKTFS) are enriched in basic and acidic residues. The interval 356-379 (FEQRQNTENKQEKTFSSEESNSKP) is disordered.

The protein belongs to the DNA mismatch repair MutL/HexB family.

This protein is involved in the repair of mismatches in DNA. It is required for dam-dependent methyl-directed DNA mismatch repair. May act as a 'molecular matchmaker', a protein that promotes the formation of a stable complex between two or more DNA-binding proteins in an ATP-dependent manner without itself being part of a final effector complex. The polypeptide is DNA mismatch repair protein MutL (Staphylococcus aureus (strain MRSA252)).